Reading from the N-terminus, the 371-residue chain is Forkhead box protein E1 (371 aa).

A disordered region spans residues 21 to 53 (EERGEAAAAGAGVPAEAAGRGAGGRRRKRPLQR). Residues 26 to 39 (AAAAGAGVPAEAAG) are compositionally biased toward low complexity. Residues 43–52 (GGRRRKRPLQ) show a composition bias toward basic residues. Positions 55–149 (KPPYSYIALI…ESGSFLRRRK (95 aa)) form a DNA-binding region, fork-head.

Phosphorylated. As to expression, expressed in Rathke pouch, in thyroid, and in the epithelium of the pharyngeal wall and arches, whereas it is absent in the epithelium of the pharyngeal pouches.

The protein resides in the nucleus. Functionally, transcription factor that binds consensus sites on a variety of gene promoters and activate their transcription. Involved in proper palate formation, most probably through the expression of MSX1 and TGFB3 genes which are direct targets of this transcription factor. Also implicated in thyroid gland morphogenesis. May indirectly play a role in cell growth and migration through the regulation of WNT5A expression. This Mus musculus (Mouse) protein is Forkhead box protein E1 (Foxe1).